A 434-amino-acid chain; its full sequence is Transcription factor AP-2-epsilon (434 aa).

The segment at 30-123 is disordered; that stretch reads LNQGPYSSAP…GLSLDPRRDY (94 aa). The segment covering 52–62 has biased composition (pro residues); it reads PYFPPPYPQPP. Residues 53–58 carry the PPxY motif motif; it reads YFPPPY. Polar residues predominate over residues 81–97; sequence SSINSIHHQHQQPSWHT. The H-S-H (helix-span-helix), dimerization stretch occupies residues 278–408; it reads RRKAANVTLL…YLLESLKGMD (131 aa). Residues 415–434 form a disordered region; that stretch reads TGNGHSAAESKSEKDIKHRK. Basic and acidic residues predominate over residues 422 to 434; that stretch reads AESKSEKDIKHRK.

Belongs to the AP-2 family. In terms of assembly, binds DNA as a dimer. Can form homodimers or heterodimers with other AP-2 family members.

Its subcellular location is the nucleus. Sequence-specific DNA-binding protein that interacts with inducible viral and cellular enhancer elements to regulate transcription of selected genes. AP-2 factors bind to the consensus sequence 5'-GCCNNNGGC-3' and activate genes involved in a large spectrum of important biological functions. The sequence is that of Transcription factor AP-2-epsilon from Xenopus laevis (African clawed frog).